The following is a 146-amino-acid chain: Putative pre-16S rRNA nuclease (146 aa).

Belongs to the YqgF nuclease family.

It localises to the cytoplasm. Could be a nuclease involved in processing of the 5'-end of pre-16S rRNA. The chain is Putative pre-16S rRNA nuclease from Burkholderia thailandensis (strain ATCC 700388 / DSM 13276 / CCUG 48851 / CIP 106301 / E264).